Consider the following 167-residue polypeptide: Small heat shock protein C1 (167 aa).

A sHSP domain is found at 59 to 167 (PLYESNSIKS…EQDAREITIN (109 aa)).

It belongs to the small heat shock protein (HSP20) family.

This chain is Small heat shock protein C1 (hspC1), found in Rickettsia felis (strain ATCC VR-1525 / URRWXCal2) (Rickettsia azadi).